The chain runs to 161 residues: Transcription antitermination protein NusB (161 aa).

The interval 1 to 22 (MNLSDFKPGEGTEVPEEEKSVS) is disordered.

This sequence belongs to the NusB family.

Functionally, involved in transcription antitermination. Required for transcription of ribosomal RNA (rRNA) genes. Binds specifically to the boxA antiterminator sequence of the ribosomal RNA (rrn) operons. The polypeptide is Transcription antitermination protein NusB (Hydrogenovibrio crunogenus (strain DSM 25203 / XCL-2) (Thiomicrospira crunogena)).